A 427-amino-acid chain; its full sequence is Glutamate-1-semialdehyde 2,1-aminomutase (427 aa).

At Lys267 the chain carries N6-(pyridoxal phosphate)lysine.

The protein belongs to the class-III pyridoxal-phosphate-dependent aminotransferase family. HemL subfamily. Homodimer. The cofactor is pyridoxal 5'-phosphate.

It is found in the cytoplasm. It carries out the reaction (S)-4-amino-5-oxopentanoate = 5-aminolevulinate. The protein operates within porphyrin-containing compound metabolism; protoporphyrin-IX biosynthesis; 5-aminolevulinate from L-glutamyl-tRNA(Glu): step 2/2. The polypeptide is Glutamate-1-semialdehyde 2,1-aminomutase (Desulfosudis oleivorans (strain DSM 6200 / JCM 39069 / Hxd3) (Desulfococcus oleovorans)).